A 577-amino-acid chain; its full sequence is Arginine--tRNA ligase (577 aa).

The short motif at Ala132 to His142 is the 'HIGH' region element.

Belongs to the class-I aminoacyl-tRNA synthetase family. Monomer.

The protein localises to the cytoplasm. It carries out the reaction tRNA(Arg) + L-arginine + ATP = L-arginyl-tRNA(Arg) + AMP + diphosphate. This chain is Arginine--tRNA ligase, found in Pelagibacter ubique (strain HTCC1062).